The chain runs to 374 residues: Pectate lyase 3 (374 aa).

A signal peptide spans 1 to 22 (MKYLLPSAAAGLLLLAAQPTMA). Cys-93 and Cys-176 form a disulfide bridge. Asp-150, Asp-152, Glu-187, and Asp-191 together coordinate Ca(2+). Residue Arg-239 is part of the active site. A disulfide bridge connects residues Cys-350 and Cys-373.

The protein belongs to the polysaccharide lyase 1 family. PLADES subfamily. Ca(2+) serves as cofactor.

Its subcellular location is the secreted. The enzyme catalyses Eliminative cleavage of (1-&gt;4)-alpha-D-galacturonan to give oligosaccharides with 4-deoxy-alpha-D-galact-4-enuronosyl groups at their non-reducing ends.. The protein operates within glycan metabolism; pectin degradation; 2-dehydro-3-deoxy-D-gluconate from pectin: step 2/5. Involved in maceration and soft-rotting of plant tissue. This is Pectate lyase 3 (pel3) from Pectobacterium carotovorum (Erwinia carotovora).